Reading from the N-terminus, the 218-residue chain is Very-long-chain (3R)-3-hydroxyacyl-CoA dehydratase hpo-8 (218 aa).

Helical transmembrane passes span 15-35 (ILGWSAILVKTVLGLANGLTW), 44-64 (FELKIFQTAAILEVIHAIVGL), 86-106 (ILHLCSTARFSIGVPLLLVAW), 137-157 (LFYVLYPMGVSGELLTLFASL), and 176-196 (MGISFWWVLIIAALSYIPGFP). Active-site residues include Y142 and E149.

The protein belongs to the very long-chain fatty acids dehydratase HACD family.

It is found in the membrane. It catalyses the reaction a very-long-chain (3R)-3-hydroxyacyl-CoA = a very-long-chain (2E)-enoyl-CoA + H2O. Its pathway is lipid metabolism; fatty acid biosynthesis. Functionally, catalyzes the third of the four reactions of the long-chain fatty acids elongation cycle. This endoplasmic reticulum-bound enzymatic process, allows the addition of two carbons to the chain of long- and very long-chain fatty acids/VLCFAs per cycle. This enzyme catalyzes the dehydration of the 3-hydroxyacyl-CoA intermediate into trans-2,3-enoyl-CoA, within each cycle of fatty acid elongation. Thereby, it participates in the production of VLCFAs of different chain lengths that are involved in multiple biological processes as precursors of membrane lipids and lipid mediators. The sequence is that of Very-long-chain (3R)-3-hydroxyacyl-CoA dehydratase hpo-8 (hpo-8) from Caenorhabditis elegans.